A 200-amino-acid chain; its full sequence is MPIDSSPLPCSVLLLSGGRGQRMGGQDKGLLEWRGQPLIAHLQRLARPLTDDLIISCNRNPERYADYADQLVNDDSPDFPGPLAGIRAGLAAARHEHLLILPCDVPHIDAPLLADLRETARRNLLLPVMVRHGEFWEPLICIIPTRLRAAVEDAWHAGERSPRKIFLQLGGVGLECPADDPRLANLNTPQLLQTPSGVSE.

Residues 15–17 (LSG), K28, D74, and D104 contribute to the GTP site. D104 contacts Mg(2+).

Belongs to the MobA family. Monomer. It depends on Mg(2+) as a cofactor.

Its subcellular location is the cytoplasm. The catalysed reaction is Mo-molybdopterin + GTP + H(+) = Mo-molybdopterin guanine dinucleotide + diphosphate. In terms of biological role, transfers a GMP moiety from GTP to Mo-molybdopterin (Mo-MPT) cofactor (Moco or molybdenum cofactor) to form Mo-molybdopterin guanine dinucleotide (Mo-MGD) cofactor. This is Molybdenum cofactor guanylyltransferase from Pseudomonas fluorescens (strain SBW25).